Consider the following 513-residue polypeptide: Autophagy-related protein 18 (513 aa).

A WD 1 repeat occupies 2 to 40 (SDLPIINFINFNQNGTCISIGTSQGFKIFNCEPFGRFYQ). The interval 167-225 (NNINIKKSDAAEDPLRKDHFAYDPSDHSHPQSTTESTSNNHNRTYSSGNNNNTNSNPNK) is disordered. The segment covering 172–195 (KKSDAAEDPLRKDHFAYDPSDHSH) has biased composition (basic and acidic residues). Low complexity predominate over residues 205 to 225 (NNHNRTYSSGNNNNTNSNPNK). The WD 2 repeat unit spans residues 248–288 (AHKGEIAALKLSADGTLLATASEKGTIIRVFNVENGSKVYQ). Positions 289–292 (FRRG) are necessary for proper localization to vacuole membrane. The L/FRRG motif signature appears at 289 to 293 (FRRGT). A WD 3 repeat occupies 293 to 332 (TYSTKISSLSFSKDNQFLAVCSSSKTVHIFKLGEKIIDNT). Positions 333–398 (KPNELNSDDD…TVGRMIRKSS (66 aa)) are disordered. The segment covering 338 to 369 (NSDDDMDDDLLPQFENGDDEEEVDEETLDEEA) has biased composition (acidic residues).

This sequence belongs to the WD repeat PROPPIN family. Component of the PI(3,5)P2 regulatory complex. Interacts with ATG2 and ATG9. The ATG2-ATG18 complex is essential for autophagosome formation.

The protein resides in the preautophagosomal structure membrane. It is found in the vacuole membrane. The protein localises to the endosome membrane. Functionally, component of the PI(3,5)P2 regulatory complex that regulates both the synthesis and turnover of phosphatidylinositol 3,5-bisphosphate (PtdIns(3,5)P2). Plays an important role in osmotically-induced vacuole fragmentation. Required for cytoplasm to vacuole transport (Cvt) vesicle formation, pexophagy and starvation-induced autophagy. Involved in correct ATG9 trafficking to the pre-autophagosomal structure. With ATG2, protects ATG8 from ATG4-mediated cleavage. This is Autophagy-related protein 18 from Kluyveromyces marxianus (strain DMKU3-1042 / BCC 29191 / NBRC 104275) (Yeast).